An 812-amino-acid chain; its full sequence is Hyaluronate lyase HylB (812 aa).

The segment at residues 1-32 (MFGTPSRRTFLTASALSAMALAASPTVTDAIA) is a signal peptide (tat-type signal). Catalysis depends on residues N222, H272, and Y281.

The protein belongs to the polysaccharide lyase 8 family. Predicted to be exported by the Tat system. The position of the signal peptide cleavage has been experimentally proven.

It is found in the secreted. The enzyme catalyses [hyaluronan](n) = n 3-(4-deoxy-beta-D-gluc-4-enuronosyl)-N-acetyl-D-glucosamine + H2O. Degrades hyaluronic acid (HA) exclusively into HA disaccharides (HA-2). Produced HA-2s confer anti-inflammatory properties leading to reduced immunopathology in the mouse model of acne. This Cutibacterium acnes (Propionibacterium acnes) protein is Hyaluronate lyase HylB.